We begin with the raw amino-acid sequence, 391 residues long: Ammonium transporter Amt1 (391 aa).

10 consecutive transmembrane segments (helical) span residues 12–32 (VFFF…FIAL), 51–71 (LDLA…SYGF), 88–108 (AWWM…TGGV), 112–132 (IKIL…YPIV), 152–172 (AGSG…AYVL), 192–212 (IPIA…FNIG), 223–243 (LASV…GGAL), 261–281 (VAVC…VGLL), 305–325 (IGPV…IPFL), and 338–358 (GQII…LIIY).

This sequence belongs to the ammonia transporter channel (TC 1.A.11.2) family. Homotrimer. Interacts and forms a complex with GlnK1.

Its subcellular location is the cell membrane. With respect to regulation, activity is regulated by the nitrogen regulatory protein GlnK1 via direct interaction. Formation of the GlnK1/Amt1 complex is decreased in the presence of Mg-ATP or 2-oxoglutarate. The presence of both effectors abolishes the formation of the complex. In terms of biological role, involved in the uptake of ammonium/ammonia (NH(4)(+)/NH(3)). Transport is electrogenic. This Methanocaldococcus jannaschii (strain ATCC 43067 / DSM 2661 / JAL-1 / JCM 10045 / NBRC 100440) (Methanococcus jannaschii) protein is Ammonium transporter Amt1.